A 915-amino-acid polypeptide reads, in one-letter code: Probable serine/threonine-protein kinase dyrk2 (915 aa).

Composition is skewed to low complexity over residues 51–79, 108–119, 170–185, and 196–218; these read TSNT…PTIS, SSSKSSSNSSSI, SSSS…STTS, and SSNS…SGSS. Disordered stretches follow at residues 51–119, 132–334, and 349–533; these read TSNT…SSSI, FSSS…SKSS, and AIKS…PTKS. A compositionally biased stretch (polar residues) spans 234–260; that stretch reads PSHTISDSPRSSTMKSRSVSISNGSLF. 6 stretches are compositionally biased toward low complexity: residues 261–287, 300–333, 352–364, 379–391, 399–425, and 433–533; these read SPTN…SSIS, SSST…PSKS, SRSL…LARV, SSSS…SFSS, SSSK…ASKI, and SLSS…PTKS. A Protein kinase domain is found at 605–902; the sequence is FEIVSILGQG…AEQGLKHDWI (298 aa). ATP-binding positions include 611–619 and Lys-634; that span reads LGQGSFCQV. The Proton acceptor role is filled by Asp-731.

The protein belongs to the protein kinase superfamily. CMGC Ser/Thr protein kinase family. MNB/DYRK subfamily.

It catalyses the reaction L-seryl-[protein] + ATP = O-phospho-L-seryl-[protein] + ADP + H(+). It carries out the reaction L-threonyl-[protein] + ATP = O-phospho-L-threonyl-[protein] + ADP + H(+). The catalysed reaction is L-tyrosyl-[protein] + ATP = O-phospho-L-tyrosyl-[protein] + ADP + H(+). The chain is Probable serine/threonine-protein kinase dyrk2 (dyrk2) from Dictyostelium discoideum (Social amoeba).